A 466-amino-acid chain; its full sequence is DNA polymerase delta subunit 3 (466 aa).

The residue at position 2 (Ala2) is an N-acetylalanine. Disordered stretches follow at residues 169–188 (NNEL…VSQQ) and 199–232 (KAAA…PGKG). Residues 206–217 (ETNKETKTEAKE) show a composition bias toward basic and acidic residues. A Glycyl lysine isopeptide (Lys-Gly) (interchain with G-Cter in SUMO); alternate cross-link involves residue Lys258. Lys258 participates in a covalent cross-link: Glycyl lysine isopeptide (Lys-Gly) (interchain with G-Cter in SUMO2); alternate. A Glycyl lysine isopeptide (Lys-Gly) (interchain with G-Cter in SUMO2) cross-link involves residue Lys261. Disordered stretches follow at residues 274–393 (KLAT…KTYL) and 406–466 (ESES…FQRK). Thr277 carries the phosphothreonine modification. Residues 286 to 296 (KKAEPVKVLQK) show a composition bias toward basic and acidic residues. The residue at position 307 (Ser307) is a Phosphoserine. A compositionally biased stretch (pro residues) spans 349-361 (PSPPPPPSPPLEP). Phosphoserine occurs at positions 407 and 409. Phosphothreonine is present on Thr411. Ser413 carries the phosphoserine modification. Over residues 432–441 (VKKEPREERK) the composition is skewed to basic and acidic residues. Residue Lys433 forms a Glycyl lysine isopeptide (Lys-Gly) (interchain with G-Cter in SUMO); alternate linkage. Lys433 participates in a covalent cross-link: Glycyl lysine isopeptide (Lys-Gly) (interchain with G-Cter in SUMO2); alternate. Residues 455-466 (RQVSITGFFQRK) show a composition bias toward polar residues. The PIP-box signature appears at 456-463 (QVSITGFF). Residue Ser458 is modified to Phosphoserine.

In terms of assembly, component of both the DNA polymerase delta and DNA polymerase zeta complexes. The tetrameric DNA polymerase delta complex (Pol-delta4), which consists of POLD1/p125, POLD2/p50, POLD3/p66/p68 and POLD4/p12, with POLD1 bearing DNA polymerase and 3' to 5' proofreading exonuclease activities. Within this complex, directly interacts with POLD2. Following stress caused by DNA damaging agents or by replication stress, POLD4 is degraded and Pol-delta4 is converted into a trimeric form of the complex (Pol-delta3), which consists of POLD1, POLD2 and POLD3. Pol-delta3 is the major form occurring at S phase replication sites, as well as DNA damage sites. Directly interacts with PCNA, as do POLD1 and POLD4; this interaction stimulates Pol-delta polymerase activity. POLD3 phosphorylation at Ser-458 impairs PCNA binding. Component of the DNA polymerase zeta complex (POLZ), which consists of REV3L, MAD2L2, POLD2 and POLD3, with REV3L bearing DNA polymerase catalytic activity. The DNA polymerase delta complex interacts with POLDIP2; this interaction is probably mediated through direct binding to POLD2. Post-translationally, ubiquitinated, but not targeted to the proteasome. Sumoylated. Sumoylation with SUMO3 may be predominant. In terms of processing, phosphorylation at Ser-458 is catalyzed in vitro by PKA. It is thought to decrease the affinity for PCNA and Pol-delta4 processivity. Can also be phosphorylated in vitro by CDK1-cyclin-A complex, as well as CDK2-cyclin-A and CDK2-cyclin-E complexes. PCNA interferes with CDK-cyclin phosphorylation.

The protein resides in the cytoplasm. Its subcellular location is the nucleus. Its function is as follows. Accessory component of both the DNA polymerase delta complex and the DNA polymerase zeta complex. As a component of the trimeric and tetrameric DNA polymerase delta complexes (Pol-delta3 and Pol-delta4, respectively), plays a role in high fidelity genome replication, including in lagging strand synthesis, and repair. Required for optimal Pol-delta activity. Stabilizes the Pol-delta complex and plays a major role in Pol-delta stimulation by PCNA. Pol-delta3 and Pol-delta4 are characterized by the absence or the presence of POLD4. They exhibit differences in catalytic activity. Most notably, Pol-delta3 shows higher proofreading activity than Pol-delta4. Although both Pol-delta3 and Pol-delta4 process Okazaki fragments in vitro, Pol-delta3 may also be better suited to fulfill this task, exhibiting near-absence of strand displacement activity compared to Pol-delta4 and stalling on encounter with the 5'-blocking oligonucleotides. Pol-delta3 idling process may avoid the formation of a gap, while maintaining a nick that can be readily ligated. Along with DNA polymerase kappa, DNA polymerase delta carries out approximately half of nucleotide excision repair (NER) synthesis following UV irradiation. In this context, POLD3, along with PCNA and RFC1-replication factor C complex, is required to recruit POLD1, the catalytic subunit of the polymerase delta complex, to DNA damage sites. Under conditions of DNA replication stress, required for the repair of broken replication forks through break-induced replication (BIR). Involved in the translesion synthesis (TLS) of templates carrying O6-methylguanine or abasic sites performed by Pol-delta4, independently of DNA polymerase zeta (REV3L) or eta (POLH). Facilitates abasic site bypass by DNA polymerase delta by promoting extension from the nucleotide inserted opposite the lesion. Also involved in TLS, as a component of the tetrameric DNA polymerase zeta complex. Along with POLD2, dramatically increases the efficiency and processivity of DNA synthesis of the DNA polymerase zeta complex compared to the minimal zeta complex, consisting of only REV3L and REV7. The protein is DNA polymerase delta subunit 3 (POLD3) of Homo sapiens (Human).